The sequence spans 75 residues: Protein Tlp homolog (75 aa).

Positions 53–75 (REALDGMREEIKDEARDKKNGYM) are disordered.

It belongs to the Tlp family.

The polypeptide is Protein Tlp homolog (Clostridium botulinum (strain ATCC 19397 / Type A)).